The chain runs to 999 residues: Collagen alpha-1(I) chain (999 aa).

The disordered stretch occupies residues 1 to 999 (SYGYDEKSAG…PGPPGPPGPP (999 aa)). Position 7 is an allysine (Lys-7). Position 8 is a phosphoserine (Ser-8). 11 positions are modified to 4-hydroxyproline: Pro-27, Pro-30, Pro-33, Pro-42, Pro-45, Pro-48, Pro-62, Pro-77, Pro-83, Pro-92, and Pro-98. Residues 65–79 (NGDDGEAGKPGRPGE) are compositionally biased toward basic and acidic residues. At Lys-101 the chain carries 5-hydroxylysine; alternate. Lys-101 carries an O-linked (Gal...) hydroxylysine; alternate glycan. A Phosphoserine modification is found at Ser-107. Positions 115–131 (DAGPAGPKGEPGSPGEN) are enriched in low complexity. 16 positions are modified to 4-hydroxyproline: Pro-125, Pro-128, Pro-134, Pro-143, Pro-149, Pro-170, Pro-179, Pro-182, Pro-209, Pro-212, Pro-224, Pro-230, Pro-239, Pro-245, Pro-248, and Pro-263. The segment covering 149 to 167 (PGASGPAGARGNDGATGAA) has biased composition (low complexity). Positions 169–181 (PPGPTGPAGPPGF) are enriched in pro residues. A compositionally biased stretch (low complexity) spans 215 to 254 (AGAAGPAGNPGADGQPGAKGANGAPGIAGAPGFPGARGPS). The residue at position 266 (Lys-266) is a 5-hydroxylysine. 4-hydroxyproline occurs at positions 272, 275, 287, 296, 311, 317, 326, and 332. Residues 321–330 (GERGGPGSRG) are compositionally biased toward gly residues. Lys-341 is subject to 5-hydroxylysine. 4-hydroxyproline occurs at positions 350, 359, 365, 371, 380, 383, 392, 401, 407, 419, 429, 432, 450, 468, 474, 480, 486, 492, 498, 510, 526, 532, 538, and 547. The span at 374–400 (KGLTGSPGSPGPDGKTGPPGPAGQDGR) shows a compositional bias: low complexity. Residues 462-489 (QGPAGSPGFQGLPGPAGPPGEAGKPGEQ) show a composition bias toward low complexity. A compositionally biased stretch (low complexity) spans 522-535 (APGAPGSQGAPGLQ). Residue Lys-559 is modified to 5-hydroxylysine. Residues Pro-565, Pro-580, and Pro-586 each carry the 4-hydroxyproline modification. Residues 592–606 (SGPSGPAGPTGARGA) show a composition bias toward low complexity. Phosphoserine is present on Ser-595. Pro-607, Pro-613, Pro-616, Pro-625, Pro-631, Pro-649, Pro-658, and Pro-667 each carry 4-hydroxyproline. Positions 619–646 (AGFAGPPGADGQPGAKGEPGDAGAKGDA) are enriched in low complexity. Residues 648-660 (PPGPAGPTGPPGP) are compositionally biased toward pro residues. Lys-670 carries the 5-hydroxylysine modification. The span at 675–691 (SAGPPGATGFPGAAGRV) shows a compositional bias: low complexity. 4-hydroxyproline occurs at positions 679 and 685. Pro-693 carries the post-translational modification 3-hydroxyproline. 16 positions are modified to 4-hydroxyproline: Pro-694, Pro-703, Pro-706, Pro-727, Pro-736, Pro-745, Pro-754, Pro-772, Pro-781, Pro-784, Pro-790, Pro-805, Pro-811, Pro-817, Pro-826, and Pro-832. The span at 720-729 (ETGPAGRPGE) shows a compositional bias: low complexity. Residues 739 to 754 (SGEKGSPGADGPAGAP) show a composition bias toward low complexity. A compositionally biased stretch (pro residues) spans 804–814 (PPGPVGPPGLA). Residues 816 to 831 (PPGESGREGSPGAEGS) are compositionally biased toward low complexity. Position 841 is a 5-hydroxylysine (Lys-841). The segment covering 849–864 (PGPPGAPGAPGAPGPV) has biased composition (pro residues). 3 positions are modified to 4-hydroxyproline: Pro-852, Pro-855, and Pro-858. A compositionally biased stretch (low complexity) spans 885-899 (AGPAGARGPAGPQGP). The segment covering 900-914 (RGDKGETGEQGDRGI) has biased composition (basic and acidic residues). Lys-903 carries the 5-hydroxylysine modification. Residue Lys-915 is modified to 5-hydroxylysine; alternate. Residue Lys-915 is glycosylated (O-linked (Gal...) hydroxylysine; alternate). A 4-hydroxyproline mark is found at Pro-930, Pro-933, Pro-951, and Pro-966. Positions 933–966 (PGEQGPSGASGPAGPRGPPGSAGSPGKDGLNGLP) are enriched in low complexity. At Pro-971 the chain carries 3-hydroxyproline. Pro-972 carries the post-translational modification 4-hydroxyproline. The segment covering 984–999 (VGPPGPPGPPGPPGPP) has biased composition (pro residues). Pro-986 bears the 3-hydroxyproline mark. Pro-987 carries the post-translational modification 4-hydroxyproline. Pro-989 carries the post-translational modification 3-hydroxyproline. Pro-990 carries the post-translational modification 4-hydroxyproline. Pro-992 is modified (3-hydroxyproline). 4-hydroxyproline is present on residues Pro-993, Pro-996, and Pro-999.

Belongs to the fibrillar collagen family. Trimers of one alpha 2(I) and two alpha 1(I) chains. Contains mostly 4-hydroxyproline. Proline residues at the third position of the tripeptide repeating unit (G-X-Y) are hydroxylated in some or all of the chains. In terms of processing, contains 3-hydroxyproline at a few sites. This modification occurs on the first proline residue in the sequence motif Gly-Pro-Hyp, where Hyp is 4-hydroxyproline. Post-translationally, lysine residues at the third position of the tripeptide repeating unit (G-X-Y) are 5-hydroxylated in some or all of the chains. O-glycosylated on hydroxylated lysine residues. The O-linked glycan consists of a Glc-Gal disaccharide. Expressed in bones.

The protein resides in the secreted. The protein localises to the extracellular space. It localises to the extracellular matrix. Functionally, type I collagen is a member of group I collagen (fibrillar forming collagen). In Choloepus hoffmanni (Hoffmann's two-fingered sloth), this protein is Collagen alpha-1(I) chain.